Reading from the N-terminus, the 142-residue chain is Cell wall-binding protein YqgA (142 aa).

The N-terminal stretch at 1–28 is a signal peptide; it reads MKQGKFSVFLILLLMLTLVVAPKEKAEA.

In terms of assembly, found in a complex with F(1)F(0) ATP synthase and SpoIIIJ and YqjG.

The protein localises to the secreted. It is found in the cell wall. The chain is Cell wall-binding protein YqgA (yqgA) from Bacillus subtilis (strain 168).